The sequence spans 377 residues: Nuclear pore complex protein NUP54 (377 aa).

The span at 1 to 18 shows a compositional bias: low complexity; it reads MFGTPSSSPSFGTPSSTP. Positions 1–104 are disordered; the sequence is MFGTPSSSPS…NTAQQQQQTP (104 aa). 7 consecutive repeat copies span residues 2-3, 11-12, 20-21, 27-28, 36-37, 49-50, and 87-88. Residues 2 to 88 form a 7 X 2 AA repeats of F-G region; sequence FGTPSSSPSF…FQQQPSSNFG (87 aa). Residues 19–32 show a composition bias toward polar residues; sequence AFGTSSPAFGTPSA. A compositionally biased stretch (low complexity) spans 39-104; sequence PSNPSFSSGG…NTAQQQQQTP (66 aa).

This sequence belongs to the NUP54 family. As to quaternary structure, part of the nuclear pore complex (NPC). The NPC has an eight-fold symmetrical structure comprising a central transport channel and two rings, the cytoplasmic and nuclear rings, to which eight filaments are attached. The cytoplasmic filaments have loose ends, while the nuclear filaments are joined in a distal ring, forming a nuclear basket. NPCs are highly dynamic in configuration and composition, and can be devided in 3 subcomplexes, the NUP62 subcomplex, the NUP107-160 subcomplex and the NUP93 subcomplex, containing approximately 30 different nucleoporin proteins.

It is found in the nucleus envelope. It localises to the nucleus. Its subcellular location is the nuclear pore complex. This chain is Nuclear pore complex protein NUP54, found in Arabidopsis thaliana (Mouse-ear cress).